The primary structure comprises 404 residues: MQHPKKVVLAYSGGVDTSVCIPYLKNEYGISEVITFVADLGQGDDIESISQKALNSGATKSVIGNLVEDFVEKYAFPAIRANALYGEKYPLSTALARPLIAENLVKLARKLNAGAVAHGCTGKGNDQVRFDLAINALGPDLEIITPAREWKMSREEAILYGEKFGIPAPVSKKSPYSIDVNLLGRSVEAGFLEDPMQEPNEEVFAMTSSIDDSPNYPKDIEITFKNGFPIAIGNESLSPLKIIQKVNYLAGKNGFGRIDMIEDRVVGIKSREIYEAPGLLLLIKAHKELESITLNPDVLDFKNLVEKKWAQLVYQGFWFGPLKKALDGFIDATQTSVNGKVKIRLHKGNAIIIGRSSENNSLYREDLATYSKDDIFDHKQAEGFIYMWGMSNKIWAELNSKMNN.

ATP-binding positions include 10-18 (AYSGGVDTS) and Ala-38. Tyr-89 is a binding site for L-citrulline. Gly-119 contacts ATP. L-aspartate-binding residues include Thr-121, Asn-125, and Asp-126. Asn-125 lines the L-citrulline pocket. L-citrulline-binding residues include Arg-129, Ser-177, Ser-186, Glu-262, and Tyr-274.

Belongs to the argininosuccinate synthase family. Type 1 subfamily. As to quaternary structure, homotetramer.

It is found in the cytoplasm. It catalyses the reaction L-citrulline + L-aspartate + ATP = 2-(N(omega)-L-arginino)succinate + AMP + diphosphate + H(+). Its pathway is amino-acid biosynthesis; L-arginine biosynthesis; L-arginine from L-ornithine and carbamoyl phosphate: step 2/3. The chain is Argininosuccinate synthase from Prochlorococcus marinus (strain MIT 9515).